Here is a 156-residue protein sequence, read N- to C-terminus: ATP synthase subunit b (156 aa).

Residues 5-27 (ITLIGQMITFAIFVGFTMKFVWP) traverse the membrane as a helical segment.

This sequence belongs to the ATPase B chain family. F-type ATPases have 2 components, F(1) - the catalytic core - and F(0) - the membrane proton channel. F(1) has five subunits: alpha(3), beta(3), gamma(1), delta(1), epsilon(1). F(0) has three main subunits: a(1), b(2) and c(10-14). The alpha and beta chains form an alternating ring which encloses part of the gamma chain. F(1) is attached to F(0) by a central stalk formed by the gamma and epsilon chains, while a peripheral stalk is formed by the delta and b chains.

It is found in the cell inner membrane. Its function is as follows. F(1)F(0) ATP synthase produces ATP from ADP in the presence of a proton or sodium gradient. F-type ATPases consist of two structural domains, F(1) containing the extramembraneous catalytic core and F(0) containing the membrane proton channel, linked together by a central stalk and a peripheral stalk. During catalysis, ATP synthesis in the catalytic domain of F(1) is coupled via a rotary mechanism of the central stalk subunits to proton translocation. Component of the F(0) channel, it forms part of the peripheral stalk, linking F(1) to F(0). This is ATP synthase subunit b from Francisella philomiragia subsp. philomiragia (strain ATCC 25017 / CCUG 19701 / FSC 153 / O#319-036).